A 317-amino-acid chain; its full sequence is Protease HtpX homolog (317 aa).

Helical transmembrane passes span 14–34 (LMGI…LYYI) and 41–61 (IALL…QWLF). Histidine 146 provides a ligand contact to Zn(2+). Residue glutamate 147 is part of the active site. Histidine 150 provides a ligand contact to Zn(2+). The next 2 membrane-spanning stretches (helical) occupy residues 158–178 (MLLA…TLLF) and 189–209 (IVLL…LILA). Glutamate 215 contacts Zn(2+).

It belongs to the peptidase M48B family. It depends on Zn(2+) as a cofactor.

Its subcellular location is the cell membrane. The protein is Protease HtpX homolog of Thermoplasma acidophilum (strain ATCC 25905 / DSM 1728 / JCM 9062 / NBRC 15155 / AMRC-C165).